A 393-amino-acid chain; its full sequence is NADH-quinone oxidoreductase subunit D (393 aa).

Belongs to the complex I 49 kDa subunit family. As to quaternary structure, NDH-1 is composed of 14 different subunits. Subunits NuoB, C, D, E, F, and G constitute the peripheral sector of the complex.

The protein resides in the cell inner membrane. It catalyses the reaction a quinone + NADH + 5 H(+)(in) = a quinol + NAD(+) + 4 H(+)(out). Its function is as follows. NDH-1 shuttles electrons from NADH, via FMN and iron-sulfur (Fe-S) centers, to quinones in the respiratory chain. The immediate electron acceptor for the enzyme in this species is believed to be ubiquinone. Couples the redox reaction to proton translocation (for every two electrons transferred, four hydrogen ions are translocated across the cytoplasmic membrane), and thus conserves the redox energy in a proton gradient. This is NADH-quinone oxidoreductase subunit D from Ehrlichia ruminantium (strain Welgevonden).